Reading from the N-terminus, the 127-residue chain is Aspartate 1-decarboxylase (127 aa).

Serine 25 serves as the catalytic Schiff-base intermediate with substrate; via pyruvic acid. A Pyruvic acid (Ser) modification is found at serine 25. Residue threonine 57 coordinates substrate. Tyrosine 58 serves as the catalytic Proton donor. A substrate-binding site is contributed by 73–75 (GAA).

It belongs to the PanD family. In terms of assembly, heterooctamer of four alpha and four beta subunits. Pyruvate serves as cofactor. Is synthesized initially as an inactive proenzyme, which is activated by self-cleavage at a specific serine bond to produce a beta-subunit with a hydroxyl group at its C-terminus and an alpha-subunit with a pyruvoyl group at its N-terminus.

It is found in the cytoplasm. It catalyses the reaction L-aspartate + H(+) = beta-alanine + CO2. It participates in cofactor biosynthesis; (R)-pantothenate biosynthesis; beta-alanine from L-aspartate: step 1/1. Functionally, catalyzes the pyruvoyl-dependent decarboxylation of aspartate to produce beta-alanine. The sequence is that of Aspartate 1-decarboxylase from Listeria monocytogenes serotype 4b (strain CLIP80459).